The primary structure comprises 235 residues: Small ribosomal subunit protein eS6 (235 aa).

Positions 190 to 212 (GFHPRERGERRRKSVRGRMIPDP) are disordered.

It belongs to the eukaryotic ribosomal protein eS6 family.

In Aeropyrum pernix (strain ATCC 700893 / DSM 11879 / JCM 9820 / NBRC 100138 / K1), this protein is Small ribosomal subunit protein eS6.